The chain runs to 875 residues: Alanine--tRNA ligase (875 aa).

Zn(2+) contacts are provided by His-563, His-567, Cys-665, and His-669.

Belongs to the class-II aminoacyl-tRNA synthetase family. Requires Zn(2+) as cofactor.

The protein resides in the cytoplasm. It carries out the reaction tRNA(Ala) + L-alanine + ATP = L-alanyl-tRNA(Ala) + AMP + diphosphate. Functionally, catalyzes the attachment of alanine to tRNA(Ala) in a two-step reaction: alanine is first activated by ATP to form Ala-AMP and then transferred to the acceptor end of tRNA(Ala). Also edits incorrectly charged Ser-tRNA(Ala) and Gly-tRNA(Ala) via its editing domain. This chain is Alanine--tRNA ligase, found in Desulfitobacterium hafniense (strain Y51).